Reading from the N-terminus, the 456-residue chain is CBL-interacting protein kinase 16 (456 aa).

A Protein kinase domain is found at 22 to 277 (YELGRLLGQG…IPEIMRTPWF (256 aa)). ATP is bound by residues 28-36 (LGQGTFAKV) and Lys51. Asp145 acts as the Proton acceptor in catalysis. The activation loop stretch occupies residues 163–192 (DFGLAALPEQLRQDGLLHTQCGTPAYVAPE). The NAF domain occupies 309–335 (AMSPRTCNAFQLISSMSSGFDLSGMFE). Residues 339–368 (KAATVFTSRAPAATVIQKLEAVGRSLGYSA) are PPI.

This sequence belongs to the protein kinase superfamily. CAMK Ser/Thr protein kinase family. SNF1 subfamily. Mn(2+) is required as a cofactor.

The catalysed reaction is L-seryl-[protein] + ATP = O-phospho-L-seryl-[protein] + ADP + H(+). The enzyme catalyses L-threonyl-[protein] + ATP = O-phospho-L-threonyl-[protein] + ADP + H(+). In terms of biological role, CIPK serine-threonine protein kinases interact with CBL proteins. Binding of a CBL protein to the regulatory NAF domain of CIPK protein lead to the activation of the kinase in a calcium-dependent manner. The polypeptide is CBL-interacting protein kinase 16 (CIPK16) (Oryza sativa subsp. japonica (Rice)).